Consider the following 265-residue polypeptide: Glutamate racemase (265 aa).

Residues 10–11 (DS) and 42–43 (YG) contribute to the substrate site. The active-site Proton donor/acceptor is cysteine 73. A substrate-binding site is contributed by 74–75 (NT). Residue cysteine 180 is the Proton donor/acceptor of the active site. 181-182 (TH) is a substrate binding site.

The protein belongs to the aspartate/glutamate racemases family.

The enzyme catalyses L-glutamate = D-glutamate. It participates in cell wall biogenesis; peptidoglycan biosynthesis. Its function is as follows. Provides the (R)-glutamate required for cell wall biosynthesis. This is Glutamate racemase from Synechococcus sp. (strain CC9605).